Reading from the N-terminus, the 486-residue chain is Vacuolar protein sorting-associated protein 73 (486 aa).

Residues 1–26 lie on the Cytoplasmic side of the membrane; it reads MNRILSSASLLSNVSMPRQNKHKITK. A helical membrane pass occupies residues 27-47; sequence ALCYAIIVASIGSIQFGYHLS. Over 48–90 the chain is Mitochondrial intermembrane; it reads ELNAPQQVLSCSEFDIPMEGYPYDRTWLGKRGYKQCIPLNDEQ. A helical transmembrane segment spans residues 91-111; sequence IGIVTSVFCIGGILGSYFATS. Over 112 to 119 the chain is Cytoplasmic; that stretch reads LANIYGRK. Residues 120 to 140 form a helical membrane-spanning segment; it reads FSSLINCTLNIVGSLIIFNSN. The Mitochondrial intermembrane portion of the chain corresponds to 141 to 146; the sequence is SYRGLI. Residues 147-167 traverse the membrane as a helical segment; sequence IGRILVGISCGSLIVIIPLFI. The Cytoplasmic segment spans residues 168–178; it reads KEVAPSGWEGL. A helical membrane pass occupies residues 179–199; that stretch reads LGSMTQICIRLGVLLTQGIAL. Residues 200–208 lie on the Mitochondrial intermembrane side of the membrane; the sequence is PLTDSYRWR. A helical transmembrane segment spans residues 209–229; sequence WILFGSFLIAVLNFFMWFIVD. The Cytoplasmic segment spans residues 230–305; sequence ESPKWLLAHG…RDRTNVKSRH (76 aa). The chain crosses the membrane as a helical span at residues 306–326; the sequence is VITVLLFGQQFCGINSIVLYG. Over 327-342 the chain is Mitochondrial intermembrane; that stretch reads TKIISQLYPQHAIRIN. The chain crosses the membrane as a helical span at residues 343–363; the sequence is FFISMVNVLVTILVSLLIHSL. Residues 364–366 lie on the Cytoplasmic side of the membrane; the sequence is PRK. A helical membrane pass occupies residues 367–387; it reads PLLMTSTVLVSVTAFIMGIAM. Topologically, residues 388-396 are mitochondrial intermembrane; sequence NHNKMNLLI. Residues 397–417 traverse the membrane as a helical segment; the sequence is VFSFIYMGVFTMGLNPLPFII. The Cytoplasmic portion of the chain corresponds to 418-432; it reads MREVSKPQDMVLAQR. Residues 433–453 traverse the membrane as a helical segment; that stretch reads YGTICNWVGTFIIAYTFPIIH. Asp454 is a topological domain (mitochondrial intermembrane). A helical membrane pass occupies residues 455 to 475; it reads VLSGYVFIIFAIIACSISAFI. Over 476–486 the chain is Cytoplasmic; the sequence is WKKVPETKRSG.

The protein belongs to the major facilitator superfamily. Sugar transporter (TC 2.A.1.1) family.

The protein localises to the mitochondrion membrane. Functionally, may be involved in vacuolar protein sorting. This chain is Vacuolar protein sorting-associated protein 73 (VPS73), found in Saccharomyces cerevisiae (strain ATCC 204508 / S288c) (Baker's yeast).